The primary structure comprises 399 residues: Tryptophan synthase beta chain (399 aa).

K92 is subject to N6-(pyridoxal phosphate)lysine.

The protein belongs to the TrpB family. Tetramer of two alpha and two beta chains. The cofactor is pyridoxal 5'-phosphate.

The catalysed reaction is (1S,2R)-1-C-(indol-3-yl)glycerol 3-phosphate + L-serine = D-glyceraldehyde 3-phosphate + L-tryptophan + H2O. The protein operates within amino-acid biosynthesis; L-tryptophan biosynthesis; L-tryptophan from chorismate: step 5/5. Functionally, the beta subunit is responsible for the synthesis of L-tryptophan from indole and L-serine. The chain is Tryptophan synthase beta chain from Oceanobacillus iheyensis (strain DSM 14371 / CIP 107618 / JCM 11309 / KCTC 3954 / HTE831).